Consider the following 258-residue polypeptide: Chaperone protein FaeE (258 aa).

Positions 1–34 are cleaved as a signal peptide; the sequence is MSKRNAVTTFFTNRVTKALGMTLALMMTCQSAMA. The disordered stretch occupies residues 239–258; sequence KKPAAPEAAKAEKADTAEQK. Basic and acidic residues predominate over residues 247-258; it reads AKAEKADTAEQK.

This sequence belongs to the periplasmic pilus chaperone family.

The protein localises to the periplasm. Functionally, mediates assembly of pili by forming soluble multimeric complexes with pili subunits as an intermediate step in the assembly process. This protein is involved in K88 pili assembly. Protects pilin protein from proteolytic degradation by DegP and from premature polymerization. The polypeptide is Chaperone protein FaeE (faeE) (Escherichia coli).